We begin with the raw amino-acid sequence, 146 residues long: Hut operon positive regulatory protein (146 aa).

It belongs to the HutP family. In terms of assembly, homohexamer.

Functionally, antiterminator that binds to cis-acting regulatory sequences on the mRNA in the presence of histidine, thereby suppressing transcription termination and activating the hut operon for histidine utilization. The polypeptide is Hut operon positive regulatory protein (Bacillus cytotoxicus (strain DSM 22905 / CIP 110041 / 391-98 / NVH 391-98)).